Consider the following 55-residue polypeptide: Large ribosomal subunit protein bL33B (55 aa).

This sequence belongs to the bacterial ribosomal protein bL33 family.

The chain is Large ribosomal subunit protein bL33B from Salinispora tropica (strain ATCC BAA-916 / DSM 44818 / JCM 13857 / NBRC 105044 / CNB-440).